A 131-amino-acid chain; its full sequence is Ribosome-binding factor A (131 aa).

The tract at residues 110–131 is disordered; sequence QMNLGEDNEDNEDKENNDPGEE. Positions 115–131 are enriched in acidic residues; sequence EDNEDNEDKENNDPGEE.

It belongs to the RbfA family. In terms of assembly, monomer. Binds 30S ribosomal subunits, but not 50S ribosomal subunits or 70S ribosomes.

It is found in the cytoplasm. Its function is as follows. One of several proteins that assist in the late maturation steps of the functional core of the 30S ribosomal subunit. Associates with free 30S ribosomal subunits (but not with 30S subunits that are part of 70S ribosomes or polysomes). Required for efficient processing of 16S rRNA. May interact with the 5'-terminal helix region of 16S rRNA. This chain is Ribosome-binding factor A, found in Natranaerobius thermophilus (strain ATCC BAA-1301 / DSM 18059 / JW/NM-WN-LF).